Here is a 162-residue protein sequence, read N- to C-terminus: Cytochrome c-type biogenesis protein CcmE (162 aa).

Over 1 to 8 (MNPVRKKR) the chain is Cytoplasmic. Residues 9 to 29 (LIIVLAIVVGVGAAVGLALSA) traverse the membrane as a helical; Signal-anchor for type II membrane protein segment. Over 30–162 (LQQNINLFYT…GETSYNQEGK (133 aa)) the chain is Periplasmic. Heme is bound by residues His-124 and Tyr-128. The span at 139 to 148 (DSGQLKHYEN) shows a compositional bias: basic and acidic residues. The tract at residues 139-162 (DSGQLKHYENGKAAGETSYNQEGK) is disordered.

The protein belongs to the CcmE/CycJ family.

The protein resides in the cell inner membrane. Functionally, heme chaperone required for the biogenesis of c-type cytochromes. Transiently binds heme delivered by CcmC and transfers the heme to apo-cytochromes in a process facilitated by CcmF and CcmH. The polypeptide is Cytochrome c-type biogenesis protein CcmE (Pseudomonas aeruginosa (strain LESB58)).